Consider the following 273-residue polypeptide: Kit ligand (273 aa).

The signal sequence occupies residues 1-25 (MKKTQTWIITCIYLQLLLFNPLVKT). Q26 bears the Pyrrolidone carboxylic acid mark. Topologically, residues 26-214 (QEICRNPVTD…AKSPEDPGLQ (189 aa)) are extracellular. 2 disulfides stabilise this stretch: C29-C114 and C68-C163. N-linked (GlcNAc...) asparagine; partial glycosylation occurs at N90. N-linked (GlcNAc...) asparagine glycosylation occurs at N145. The O-linked (GalNAc...) serine glycan is linked to S167. O-linked (GalNAc...) threonine glycans are attached at residues T168 and T180. The interval 190–211 (ASSLRNDSSSSNRKAAKSPEDP) is disordered. Over residues 191-202 (SSLRNDSSSSNR) the composition is skewed to low complexity. N-linked (GlcNAc...) asparagine glycosylation occurs at N195. Residues 215 to 237 (WTAMALPALISLVIGFAFGALYW) form a helical membrane-spanning segment. The Cytoplasmic segment spans residues 238–273 (KKKQSSLTRAVENIQINEEDNEISMLQQKEREFQEV).

Belongs to the SCF family. In terms of assembly, homodimer, non-covalently linked. Heterotetramer with KIT, binding two KIT molecules; thereby mediates KIT dimerization and subsequent activation by autophosphorylation. In terms of processing, a soluble form is produced by proteolytic processing of isoform 1 in the extracellular domain. The identity of N- and O-linked saccharides is not reported in PubMed:1708771. The O-linked polysaccharides are probably the mucin type linked to GalNAc.

It localises to the cell membrane. The protein localises to the cytoplasm. The protein resides in the cytoskeleton. It is found in the cell projection. Its subcellular location is the lamellipodium. It localises to the filopodium. The protein localises to the secreted. In terms of biological role, ligand for the receptor-type protein-tyrosine kinase KIT. Plays an essential role in the regulation of cell survival and proliferation, hematopoiesis, stem cell maintenance, gametogenesis, mast cell development, migration and function, and in melanogenesis. KITLG/SCF binding can activate several signaling pathways. Promotes phosphorylation of PIK3R1, the regulatory subunit of phosphatidylinositol 3-kinase, and subsequent activation of the kinase AKT1. KITLG/SCF and KIT also transmit signals via GRB2 and activation of RAS, RAF1 and the MAP kinases MAPK1/ERK2 and/or MAPK3/ERK1. KITLG/SCF and KIT promote activation of STAT family members STAT1, STAT3 and STAT5. KITLG/SCF and KIT promote activation of PLCG1, leading to the production of the cellular signaling molecules diacylglycerol and inositol 1,4,5-trisphosphate. KITLG/SCF acts synergistically with other cytokines, probably interleukins. This chain is Kit ligand (Kitlg), found in Rattus norvegicus (Rat).